We begin with the raw amino-acid sequence, 1571 residues long: Paternally-expressed gene 3 protein (1571 aa).

Disordered stretches follow at residues 1-120 (MYHH…NPIQ) and 137-241 (AEDD…QERG). Composition is skewed to basic and acidic residues over residues 35-56 (GSER…DRWP), 80-99 (FGLD…RSQD), 169-186 (PEAK…DESS), 193-215 (KFIK…ERPP), and 223-241 (DNWK…QERG). The segment at 199–265 (ARNPKSGRAR…DLASRSRALE (67 aa)) is 10 X 5 AA repeat of P-H-X-X-E. The segment at 199–265 (ARNPKSGRAR…DLASRSRALE (67 aa)) is 3 X 5 AA repeat of P-H-D-D-K. 4 consecutive C2H2-type zinc fingers follow at residues 325 to 347 (YVCD…QIMH), 378 to 400 (FECK…RQIH), 436 to 458 (YECK…QKIH), and 520 to 542 (YECK…QKIH). The segment at 456-495 (KIHGRGNSDDRDNERERERDRLRARAREQRERERERERER) is disordered. Disordered stretches follow at residues 585–649 (ALMG…LKFP), 672–713 (EAQK…TYEG), and 764–820 (REDA…AKKK). Over residues 592-614 (SSEHQKNRSRRNFFEGRGFEKPF) the composition is skewed to basic and acidic residues. 2 stretches are compositionally biased toward polar residues: residues 770–781 (GSSSSNYHTPNV) and 799–808 (DVTFSVPSSS). The segment covering 809-820 (VREHQKARAKKK) has biased composition (basic and acidic residues). The C2H2-type 5 zinc-finger motif lies at 850-872 (FECQECGEAFARRSELIEHQKIH). Positions 937-1070 (FNAEEPHDKE…ESHGQEKVED (134 aa)) are disordered. Over residues 940 to 1070 (EEPHDKETHG…ESHGQEKVED (131 aa)) the composition is skewed to basic and acidic residues. Repeat copies occupy residues 942–946 (PHDKE), 967–971 (PHGDE), 987–991 (PHDDK), 992–996 (PHGQE), 997–1001 (PHDDK), 1002–1006 (PHGQE), 1007–1011 (PHDDK), 1012–1016 (PHGQE), 1017–1021 (PHGDE), 1022–1026 (PHGQE), 1027–1031 (PHGDE), 1032–1036 (PHDKE), and 1047–1051 (PHSEE). 4 C2H2-type zinc fingers span residues 1091 to 1113 (YECQ…QDTH), 1147 to 1169 (YECP…QRVH), 1209 to 1231 (IRCR…MRQH), and 1266 to 1289 (FECT…TKVH). The C2H2-type 10; degenerate zinc finger occupies 1317-1339 (YECKDCGQSFLDDTVIAERMVFH). The interval 1373–1487 (NAEAAEPEVE…DQEIEVEEPY (115 aa)) is disordered. Acidic residues-rich tracts occupy residues 1377-1397 (AEPE…EVEA), 1405-1418 (EGPD…DGEA), and 1431-1485 (DADE…EVEE). C2H2-type zinc fingers lie at residues 1488–1510 (YNCH…LKSH) and 1547–1569 (FKCD…QNSH).

It belongs to the krueppel C2H2-type zinc-finger protein family. As to quaternary structure, homodimer. Interacts with SIAH1A and SIAH2. Interacts with TRAF2. As to expression, brain, glial cells, neurons, skeletal muscle, uterus and placenta. In the placenta it is found in all trophoblast cells.

The protein localises to the nucleus. The protein resides in the cytoplasm. Its function is as follows. Induces apoptosis in cooperation with SIAH1A. Acts as a mediator between p53/TP53 and BAX in a neuronal death pathway that is activated by DNA damage. Acts synergistically with TRAF2 and inhibits TNF induced apoptosis through activation of NF-kappa-B. Plays a role in regulating maternal behavior and offspring growth. This Mus musculus (Mouse) protein is Paternally-expressed gene 3 protein (Peg3).